The following is a 441-amino-acid chain: tRNA-2-methylthio-N(6)-dimethylallyladenosine synthase (441 aa).

The MTTase N-terminal domain occupies 3–119 (KKVSIRTFGC…LPGLIRNAFQ (117 aa)). Cysteine 12, cysteine 48, cysteine 82, cysteine 155, cysteine 159, and cysteine 162 together coordinate [4Fe-4S] cluster. One can recognise a Radical SAM core domain in the interval 141–371 (RSGSISAFIP…IDLQSGISGE (231 aa)). Residues 374 to 437 (GNDVGSVQEV…QATLIGRCQD (64 aa)) form the TRAM domain.

Belongs to the methylthiotransferase family. MiaB subfamily. As to quaternary structure, monomer. The cofactor is [4Fe-4S] cluster.

The protein resides in the cytoplasm. The catalysed reaction is N(6)-dimethylallyladenosine(37) in tRNA + (sulfur carrier)-SH + AH2 + 2 S-adenosyl-L-methionine = 2-methylsulfanyl-N(6)-dimethylallyladenosine(37) in tRNA + (sulfur carrier)-H + 5'-deoxyadenosine + L-methionine + A + S-adenosyl-L-homocysteine + 2 H(+). In terms of biological role, catalyzes the methylthiolation of N6-(dimethylallyl)adenosine (i(6)A), leading to the formation of 2-methylthio-N6-(dimethylallyl)adenosine (ms(2)i(6)A) at position 37 in tRNAs that read codons beginning with uridine. The polypeptide is tRNA-2-methylthio-N(6)-dimethylallyladenosine synthase (Prosthecochloris aestuarii (strain DSM 271 / SK 413)).